The sequence spans 595 residues: Neuroepithelial cell-transforming gene 1 protein (595 aa).

At M1 the chain carries N-acetylmethionine. Positions 1–42 (MEPEPAAQKQPRPRRRSRRVSMLSEEPAAGLPADTPGPAANE) are disordered. The tract at residues 1–74 (MEPEPAAQKQ…LKRKRREKDD (74 aa)) is necessary for nuclear localization. A Nuclear localization signal motif is present at residues 12-19 (RPRRRSRR). Phosphoserine is present on S21. Residues 66 to 72 (KRKRREK) carry the Nuclear localization signal motif. Phosphoserine occurs at positions 100, 106, and 122. Residues 127–151 (GDHRSPASAQKSFSRSTVPTPTKRR) form a disordered region. Polar residues predominate over residues 133 to 146 (ASAQKSFSRSTVPT). The region spanning 174-356 (KRQEAIYELS…QGVLSDINLK (183 aa)) is the DH domain. Residues 386–501 (VLLCHGELKN…WFNCIRAAIA (116 aa)) enclose the PH domain. S508 is modified (phosphoserine). Positions 555-595 (CGSSVQTVEDTRNMKAQRPQPGLRRARDKAQSGGKKKETLV) are disordered.

As to quaternary structure, interacts with RHOA in its GTP- and GDP-bound states, and with CDC42 in its GTP-bound state. Interacts with the PDZ 1 domain of BAIAP1.

Its subcellular location is the cytoplasm. The protein localises to the nucleus. In terms of biological role, acts as a guanine nucleotide exchange factor (GEF) for RhoA GTPase. May be involved in activation of the SAPK/JNK pathway. Stimulates genotoxic stress-induced RHOB activity in breast cancer cells leading to their cell death. The chain is Neuroepithelial cell-transforming gene 1 protein (Net1) from Mus musculus (Mouse).